A 478-amino-acid chain; its full sequence is Membrane-bound lytic murein transglycosylase F (478 aa).

Positions 1–22 (MTRFLFAIILGFLLTACQQVTV) are cleaved as a signal peptide. A non-LT domain region spans residues 23–257 (EETEYVPHKL…HLNEKYFGHV (235 aa)). Residues 258–478 (KRFDYIDTRA…PGTLSPDKPK (221 aa)) form an LT domain region. Glu-302 is a catalytic residue. The disordered stretch occupies residues 446–478 (SKQQNSDEEEPSDLASEDGPAPVPGTLSPDKPK). Positions 451-461 (SDEEEPSDLAS) are enriched in acidic residues.

It in the N-terminal section; belongs to the bacterial solute-binding protein 3 family. This sequence in the C-terminal section; belongs to the transglycosylase Slt family.

The protein localises to the cell outer membrane. It carries out the reaction Exolytic cleavage of the (1-&gt;4)-beta-glycosidic linkage between N-acetylmuramic acid (MurNAc) and N-acetylglucosamine (GlcNAc) residues in peptidoglycan, from either the reducing or the non-reducing ends of the peptidoglycan chains, with concomitant formation of a 1,6-anhydrobond in the MurNAc residue.. Murein-degrading enzyme that degrades murein glycan strands and insoluble, high-molecular weight murein sacculi, with the concomitant formation of a 1,6-anhydromuramoyl product. Lytic transglycosylases (LTs) play an integral role in the metabolism of the peptidoglycan (PG) sacculus. Their lytic action creates space within the PG sacculus to allow for its expansion as well as for the insertion of various structures such as secretion systems and flagella. The sequence is that of Membrane-bound lytic murein transglycosylase F from Shewanella sp. (strain MR-4).